Consider the following 231-residue polypeptide: Cytochrome c oxidase subunit 2 (231 aa).

Topologically, residues 1–14 (MAHPSQLGLQDAAS) are mitochondrial intermembrane. A helical transmembrane segment spans residues 15–45 (PVMEELLHFHDHALMIVFLISTLVFYIILAM). Residues 46–59 (MTTKMTDKYILDAQ) are Mitochondrial matrix-facing. Residues 60–87 (EIEIVWTLLPAIVLILVALPSLRILYLI) traverse the membrane as a helical segment. At 88-231 (DEVENPHLTI…WSSSMLEEAX (144 aa)) the chain is on the mitochondrial intermembrane side. Cu cation contacts are provided by His-161, Cys-196, Glu-198, Cys-200, His-204, and Met-207. Position 198 (Glu-198) interacts with Mg(2+).

Belongs to the cytochrome c oxidase subunit 2 family. Component of the cytochrome c oxidase (complex IV, CIV), a multisubunit enzyme composed of 14 subunits. The complex is composed of a catalytic core of 3 subunits MT-CO1, MT-CO2 and MT-CO3, encoded in the mitochondrial DNA, and 11 supernumerary subunits COX4I, COX5A, COX5B, COX6A, COX6B, COX6C, COX7A, COX7B, COX7C, COX8 and NDUFA4, which are encoded in the nuclear genome. The complex exists as a monomer or a dimer and forms supercomplexes (SCs) in the inner mitochondrial membrane with NADH-ubiquinone oxidoreductase (complex I, CI) and ubiquinol-cytochrome c oxidoreductase (cytochrome b-c1 complex, complex III, CIII), resulting in different assemblies (supercomplex SCI(1)III(2)IV(1) and megacomplex MCI(2)III(2)IV(2)). Found in a complex with TMEM177, COA6, COX18, COX20, SCO1 and SCO2. Interacts with TMEM177 in a COX20-dependent manner. Interacts with COX20. Interacts with COX16. It depends on Cu cation as a cofactor.

The protein localises to the mitochondrion inner membrane. It carries out the reaction 4 Fe(II)-[cytochrome c] + O2 + 8 H(+)(in) = 4 Fe(III)-[cytochrome c] + 2 H2O + 4 H(+)(out). In terms of biological role, component of the cytochrome c oxidase, the last enzyme in the mitochondrial electron transport chain which drives oxidative phosphorylation. The respiratory chain contains 3 multisubunit complexes succinate dehydrogenase (complex II, CII), ubiquinol-cytochrome c oxidoreductase (cytochrome b-c1 complex, complex III, CIII) and cytochrome c oxidase (complex IV, CIV), that cooperate to transfer electrons derived from NADH and succinate to molecular oxygen, creating an electrochemical gradient over the inner membrane that drives transmembrane transport and the ATP synthase. Cytochrome c oxidase is the component of the respiratory chain that catalyzes the reduction of oxygen to water. Electrons originating from reduced cytochrome c in the intermembrane space (IMS) are transferred via the dinuclear copper A center (CU(A)) of subunit 2 and heme A of subunit 1 to the active site in subunit 1, a binuclear center (BNC) formed by heme A3 and copper B (CU(B)). The BNC reduces molecular oxygen to 2 water molecules using 4 electrons from cytochrome c in the IMS and 4 protons from the mitochondrial matrix. The protein is Cytochrome c oxidase subunit 2 (MT-CO2) of Latimeria chalumnae (Coelacanth).